Reading from the N-terminus, the 457-residue chain is D(1B) dopamine receptor (457 aa).

Residues 1–41 (MYQPFQHLDSDQVASWQSPEMLMNKSVSRESQRRKELVAGQ) lie on the Extracellular side of the membrane. Asn24 carries an N-linked (GlcNAc...) asparagine glycan. The helical transmembrane segment at 42–67 (IVTGSLLLLLIFWTLFGNILVCTAVM) threads the bilayer. Topologically, residues 68 to 78 (RFRHLRSRVTN) are cytoplasmic. Residues 79–105 (IFIVSLAVSDLLVALLVMPWKAVAEVA) form a helical membrane-spanning segment. Over 106–114 (GHWPFGAFC) the chain is Extracellular. A disulfide bridge connects residues Cys114 and Cys199. A helical membrane pass occupies residues 115-137 (DIWVAFDIMCSTASILNLCVISV). Residues 138–156 (DRYWAISSPFRYERKMTQR) are Cytoplasmic-facing. A helical transmembrane segment spans residues 157–181 (VALLMISTAWALSVLISFIPVQLSW). The Extracellular segment spans residues 182–205 (HKSETEDHLLSNHSTGNCDSSLNR). A helical transmembrane segment spans residues 206-231 (TYAISSSLISFYIPVAIMIVTYTRIY). The Cytoplasmic segment spans residues 232 to 282 (RIAQIQIKRISTLERAAEHAQSCRSNRVDSCSRHHQTSLRTSIKKETKVLK). The helical transmembrane segment at 283 to 309 (TLSIIMGVFVCCWLPFFILNCMVPFCD) threads the bilayer. Residues 310 to 326 (RSPGHPQAGLPCVSETT) are Extracellular-facing. Residues 327-351 (FDIFVWFGWANSSLNPIIYAFNADF) traverse the membrane as a helical segment. The Cytoplasmic segment spans residues 352–457 (RKVFSSLLGC…ITPSMSNGIH (106 aa)). Residue Cys361 is the site of S-palmitoyl cysteine attachment.

It belongs to the G-protein coupled receptor 1 family. As to expression, brain and kidney.

Its subcellular location is the cell membrane. In terms of biological role, dopamine receptor whose activity is mediated by G proteins which activate adenylyl cyclase. This is D(1B) dopamine receptor (drd5) from Xenopus laevis (African clawed frog).